A 104-amino-acid chain; its full sequence is Elicitor peptide 6 (104 aa).

Residues 1-81 (MEVNGEEERR…TVEETGFMAR (81 aa)) constitute a propeptide that is removed on maturation. The span at 48 to 61 (SSSIPPSSSSSSPS) shows a compositional bias: low complexity. Residues 48–104 (SSSIPPSSSSSSPSLVEEEDSGTETVEETGFMARITAVLRRRPRPPPYSSGRPGQNN) form a disordered region. Acidic residues predominate over residues 63–74 (VEEEDSGTETVE).

This sequence belongs to the brassicaceae elicitor peptide family.

Its function is as follows. Elicitor of plant defense. This chain is Elicitor peptide 6 (PEP6), found in Arabidopsis thaliana (Mouse-ear cress).